Reading from the N-terminus, the 323-residue chain is o-succinylbenzoate synthase (323 aa).

Lys-134 functions as the Proton donor in the catalytic mechanism. Residues Asp-162, Glu-191, and Asp-214 each contribute to the Mg(2+) site. Residue Lys-236 is the Proton acceptor of the active site.

It belongs to the mandelate racemase/muconate lactonizing enzyme family. MenC type 1 subfamily. Requires a divalent metal cation as cofactor.

The catalysed reaction is (1R,6R)-6-hydroxy-2-succinyl-cyclohexa-2,4-diene-1-carboxylate = 2-succinylbenzoate + H2O. It functions in the pathway quinol/quinone metabolism; 1,4-dihydroxy-2-naphthoate biosynthesis; 1,4-dihydroxy-2-naphthoate from chorismate: step 4/7. It participates in quinol/quinone metabolism; menaquinone biosynthesis. Functionally, converts 2-succinyl-6-hydroxy-2,4-cyclohexadiene-1-carboxylate (SHCHC) to 2-succinylbenzoate (OSB). This chain is o-succinylbenzoate synthase, found in Yersinia pseudotuberculosis serotype I (strain IP32953).